The sequence spans 193 residues: DNA damage-inducible transcript 4-like protein (193 aa).

This sequence belongs to the DDIT4 family.

It is found in the cytoplasm. In terms of biological role, inhibits cell growth by regulating the TOR signaling pathway upstream of the TSC1-TSC2 complex and downstream of AKT1. This is DNA damage-inducible transcript 4-like protein (DDIT4L) from Pongo abelii (Sumatran orangutan).